The following is a 260-amino-acid chain: Ribosomal RNA small subunit methyltransferase G (260 aa).

Residues 1-45 (MKQRGPAGGRSSSPKPSAPGSGAGEGPDGRSAPASQKINKASAND) form a disordered region. Positions 9–20 (GRSSSPKPSAPG) are enriched in low complexity. Positions 33–45 (PASQKINKASAND) are enriched in polar residues. Residues G123, F128, and R193 each contribute to the S-adenosyl-L-methionine site.

Belongs to the methyltransferase superfamily. RNA methyltransferase RsmG family.

Its subcellular location is the cytoplasm. The enzyme catalyses guanosine(527) in 16S rRNA + S-adenosyl-L-methionine = N(7)-methylguanosine(527) in 16S rRNA + S-adenosyl-L-homocysteine. In terms of biological role, specifically methylates the N7 position of guanine in position 527 of 16S rRNA. In Bradyrhizobium diazoefficiens (strain JCM 10833 / BCRC 13528 / IAM 13628 / NBRC 14792 / USDA 110), this protein is Ribosomal RNA small subunit methyltransferase G.